The primary structure comprises 315 residues: DNA-directed RNA polymerase subunit alpha (315 aa).

Positions 1–228 (MIEMEKPKVE…EHLNLFITLK (228 aa)) are alpha N-terminal domain (alpha-NTD). The interval 245–315 (KEKVLEMTIE…LGLGLRPSDE (71 aa)) is alpha C-terminal domain (alpha-CTD).

It belongs to the RNA polymerase alpha chain family. As to quaternary structure, homodimer. The RNAP catalytic core consists of 2 alpha, 1 beta, 1 beta' and 1 omega subunit. When a sigma factor is associated with the core the holoenzyme is formed, which can initiate transcription.

It carries out the reaction RNA(n) + a ribonucleoside 5'-triphosphate = RNA(n+1) + diphosphate. Functionally, DNA-dependent RNA polymerase catalyzes the transcription of DNA into RNA using the four ribonucleoside triphosphates as substrates. This Alkaliphilus metalliredigens (strain QYMF) protein is DNA-directed RNA polymerase subunit alpha.